The sequence spans 374 residues: Calcium/calmodulin-dependent protein kinase type 1 (374 aa).

The region spanning 20-276 is the Protein kinase domain; that stretch reads YDFRDVLGTG…CEQALQHPWI (257 aa). ATP contacts are provided by residues 26–34 and Lys-49; that span reads LGTGAFSEV. A Glycyl lysine isopeptide (Lys-Gly) (interchain with G-Cter in ubiquitin) cross-link involves residue Lys-59. The Proton acceptor role is filled by Asp-141. Thr-177 carries the phosphothreonine; by CaMKK1 and CaMKK2 modification. Residues 276–316 form an autoinhibitory domain region; that stretch reads IAGDTALDKNIHQSVSEQIKKNFAKSKWKQAFNATAVVRHM. The tract at residues 296-317 is calmodulin-binding; that stretch reads KNFAKSKWKQAFNATAVVRHMR. Residues 315–321 carry the Nuclear export signal motif; the sequence is HMRKLQL.

It belongs to the protein kinase superfamily. CAMK Ser/Thr protein kinase family. CaMK subfamily. In terms of assembly, monomer. Interacts with XPO1. In terms of processing, phosphorylated by CaMKK1 and CaMKK2 on Thr-177. Post-translationally, polybiquitinated by the E3 ubiquitin-protein ligase complex SCF(FBXL12), leading to proteasomal degradation. In terms of tissue distribution, ubiquitous.

Its subcellular location is the cytoplasm. The protein localises to the nucleus. It carries out the reaction L-seryl-[protein] + ATP = O-phospho-L-seryl-[protein] + ADP + H(+). The enzyme catalyses L-threonyl-[protein] + ATP = O-phospho-L-threonyl-[protein] + ADP + H(+). Its activity is regulated as follows. Activated by Ca(2+)/calmodulin. Binding of calmodulin results in conformational change that relieves intrasteric autoinhibition and allows phosphorylation of Thr-177 within the activation loop by CaMKK1 or CaMKK2. Phosphorylation of Thr-177 results in several fold increase in total activity. Unlike CaMK4, is unable to exhibit autonomous activity after Ca(2+)/calmodulin activation. Functionally, calcium/calmodulin-dependent protein kinase that operates in the calcium-triggered CaMKK-CaMK1 signaling cascade and, upon calcium influx, regulates transcription activators activity, cell cycle, hormone production, cell differentiation, actin filament organization and neurite outgrowth. Recognizes the substrate consensus sequence [MVLIF]-x-R-x(2)-[ST]-x(3)-[MVLIF]. Regulates axonal extension and growth cone motility in hippocampal and cerebellar nerve cells. Upon NMDA receptor-mediated Ca(2+) elevation, promotes dendritic growth in hippocampal neurons and is essential in synapses for full long-term potentiation (LTP) and ERK2-dependent translational activation. Downstream of NMDA receptors, promotes the formation of spines and synapses in hippocampal neurons by phosphorylating ARHGEF7/BETAPIX on 'Ser-673', which results in the enhancement of ARHGEF7 activity and activation of RAC1. Promotes neuronal differentiation and neurite outgrowth by activation and phosphorylation of MARK2 on 'Ser-91', 'Ser-92', 'Ser-93' and 'Ser-294'. Promotes nuclear export of HDAC5 and binding to 14-3-3 by phosphorylation of 'Ser-259' and 'Ser-498' in the regulation of muscle cell differentiation. Regulates NUMB-mediated endocytosis by phosphorylation of NUMB on 'Ser-276' and 'Ser-295'. Involved in the regulation of basal and estrogen-stimulated migration of medulloblastoma cells through ARHGEF7/BETAPIX phosphorylation. Is required for proper activation of cyclin-D1/CDK4 complex during G1 progression in diploid fibroblasts. Plays a role in K(+) and ANG2-mediated regulation of the aldosterone synthase (CYP11B2) to produce aldosterone in the adrenal cortex. Phosphorylates EIF4G3/eIF4GII. In vitro phosphorylates CREB1, ATF1, CFTR, MYL9 and SYN1/synapsin I. This Mus musculus (Mouse) protein is Calcium/calmodulin-dependent protein kinase type 1 (Camk1).